A 387-amino-acid chain; its full sequence is MLPLSIKDDEYKPAKFNLVVKLSGWFRSILADKTSRNLFFFLCLNLSFAFVELLYGIWSNSLGLISDSFHMFFDCTALLAGLAASVISRWRSNDSFSYGYVRAEVLAGFVNGLFLIFTAFFIFSEGVERALEPPDVHHDRLLPVSIAGLLVNLVGIFVFQHGGHGHSHGGDDHGHSHSLFNGSAAHGHSHGGHGHSHGGHGHSHESKHGHDHGHSHGGHGHSHDDQHCHDDHTLTPGKGSSKQILQGVFLHIVADTLGSVGVIISAILMQKYDLMIADPICSMLIALLIGVSVVPLLRESIGILMQRTPPSLDHALPECYQRVQQLQGVYNLQEPHFWTLCTDVYIGTLKLLVAPDADSRWILSQTHNIFTQVGVRQLYVQIEVAAM.

At 1-37 (MLPLSIKDDEYKPAKFNLVVKLSGWFRSILADKTSRN) the chain is on the cytoplasmic side. The helical transmembrane segment at 38–58 (LFFFLCLNLSFAFVELLYGIW) threads the bilayer. Residues 59–67 (SNSLGLISD) are Lumenal-facing. A helical membrane pass occupies residues 68 to 88 (SFHMFFDCTALLAGLAASVIS). Residues 89-102 (RWRSNDSFSYGYVR) are Cytoplasmic-facing. A helical transmembrane segment spans residues 103–123 (AEVLAGFVNGLFLIFTAFFIF). Over 124 to 140 (SEGVERALEPPDVHHDR) the chain is Lumenal. The chain crosses the membrane as a helical span at residues 141–161 (LLPVSIAGLLVNLVGIFVFQH). Residues 161-232 (HGGHGHSHGG…HDDQHCHDDH (72 aa)) form a his-rich loop region. Residues 162–247 (GGHGHSHGGD…KGSSKQILQG (86 aa)) are Cytoplasmic-facing. Residues 167-237 (SHGGDDHGHS…CHDDHTLTPG (71 aa)) form a disordered region. Residues 187–201 (GHSHGGHGHSHGGHG) are compositionally biased toward basic residues. Composition is skewed to basic and acidic residues over residues 202-214 (HSHE…DHGH) and 221-233 (HSHD…DDHT). The helical transmembrane segment at 248-268 (VFLHIVADTLGSVGVIISAIL) threads the bilayer. Residues 269–273 (MQKYD) are Lumenal-facing. A helical transmembrane segment spans residues 274–294 (LMIADPICSMLIALLIGVSVV). Topologically, residues 295 to 387 (PLLRESIGIL…LYVQIEVAAM (93 aa)) are cytoplasmic.

This sequence belongs to the cation diffusion facilitator (CDF) transporter (TC 2.A.4) family. SLC30A subfamily. As to quaternary structure, homooligomer.

It localises to the golgi apparatus membrane. It is found in the cytoplasmic vesicle. The protein resides in the golgi apparatus. The protein localises to the trans-Golgi network. Its subcellular location is the sarcoplasmic reticulum. It localises to the mitochondrion. It carries out the reaction Zn(2+)(in) = Zn(2+)(out). Zinc ion transporter mediating zinc entry from the cytosol into the lumen of organelles along the secretory pathway. By contributing to zinc ion homeostasis within the early secretory pathway, regulates the activation and folding of enzymes like alkaline phosphatases. The chain is Zinc transporter 7 (slc30a7) from Danio rerio (Zebrafish).